Consider the following 448-residue polypeptide: SET domain-containing protein SmydA-8, isoform B (448 aa).

Positions 42–273 constitute an SET domain; that stretch reads PSWRVADSPI…AGAEITMSYA (232 aa).

It belongs to the class V-like SAM-binding methyltransferase superfamily.

The chain is SET domain-containing protein SmydA-8, isoform B from Drosophila melanogaster (Fruit fly).